Here is a 451-residue protein sequence, read N- to C-terminus: Zinc metalloproteinase nas-16 (451 aa).

The Peptidase M12A domain maps to 70 to 273; sequence QVVTKLFSPQ…LTINTAYNCK (204 aa). 4 disulfide bridges follow: C127–C272, C148–C167, C274–C291, and C296–C305. A glycan (N-linked (GlcNAc...) asparagine) is linked at N133. A Zn(2+)-binding site is contributed by H175. E176 is an active-site residue. 2 residues coordinate Zn(2+): H179 and H185. One can recognise an EGF-like domain in the interval 267–306; that stretch reads NTAYNCKCPSELLCANGGYTNPSNCLECICPLGYGGVLCD. N-linked (GlcNAc...) asparagine glycans are attached at residues N363 and N438.

Zn(2+) serves as cofactor.

Its subcellular location is the secreted. Its function is as follows. Metalloprotease. This Caenorhabditis elegans protein is Zinc metalloproteinase nas-16 (nas-16).